Here is a 726-residue protein sequence, read N- to C-terminus: Probable dipeptidyl-peptidase 5 (726 aa).

The first 19 residues, 1-19 (MGALQWLSITAAAASAVSA), serve as a signal peptide directing secretion. N-linked (GlcNAc...) asparagine glycosylation is found at N97, N153, N259, N398, N453, and N529. S564 functions as the Charge relay system in the catalytic mechanism. N611 is a glycosylation site (N-linked (GlcNAc...) asparagine). Catalysis depends on charge relay system residues D647 and H679.

The protein belongs to the peptidase S9C family.

The protein resides in the secreted. In terms of biological role, extracellular dipeptidyl-peptidase which removes N-terminal dipeptides sequentially from polypeptides having unsubstituted N-termini. In Aspergillus niger, this protein is Probable dipeptidyl-peptidase 5 (dpp5).